The following is an 85-amino-acid chain: Large ribosomal subunit protein bL27 (85 aa).

This sequence belongs to the bacterial ribosomal protein bL27 family.

The polypeptide is Large ribosomal subunit protein bL27 (Pseudomonas fluorescens (strain SBW25)).